The following is a 132-amino-acid chain: Large ribosomal subunit protein uL14 (132 aa).

It belongs to the universal ribosomal protein uL14 family. In terms of assembly, part of the 50S ribosomal subunit. Forms a cluster with proteins L3 and L24e, part of which may contact the 16S rRNA in 2 intersubunit bridges.

Its function is as follows. Binds to 23S rRNA. Forms part of two intersubunit bridges in the 70S ribosome. The protein is Large ribosomal subunit protein uL14 of Methanothrix thermoacetophila (strain DSM 6194 / JCM 14653 / NBRC 101360 / PT) (Methanosaeta thermophila).